The primary structure comprises 230 residues: MKKKGLNFLMQVAIDGPASAGKSTVAKIIAHNLGYIYIDTGAMYRACTLIAHDNHVDYGDEKAILDLVDKSTIEFKQEDGEQKVYVNGKDVSIAIRTPEITENVSQVSALKSIREKMVELQREMAGKHDVIMDGRDIGTTVLPDAEVKIFLIASVASRAKRRFLDFQEKGIHQDLKDIEHDIEVRDYKDSHREISPLKKAADAIELDTTNLTIDEVVAKISEIIQKKQKN.

An ATP-binding site is contributed by 16 to 24 (GPASAGKST).

This sequence belongs to the cytidylate kinase family. Type 1 subfamily.

It is found in the cytoplasm. It carries out the reaction CMP + ATP = CDP + ADP. It catalyses the reaction dCMP + ATP = dCDP + ADP. This is Cytidylate kinase from Lactobacillus gasseri (strain ATCC 33323 / DSM 20243 / BCRC 14619 / CIP 102991 / JCM 1131 / KCTC 3163 / NCIMB 11718 / NCTC 13722 / AM63).